The sequence spans 336 residues: F420-dependent glucose-6-phosphate dehydrogenase (336 aa).

Asp39 contributes to the coenzyme F420-(gamma-Glu)n binding site. Catalysis depends on His40, which acts as the Proton donor. Coenzyme F420-(gamma-Glu)n contacts are provided by residues Thr76 and Thr107–Gly108. Glu109 (proton acceptor) is an active-site residue. Coenzyme F420-(gamma-Glu)n is bound by residues Asn112, Gly177–Gly178, and Val180–Val181. Thr195, Lys198, Lys259, and Arg283 together coordinate substrate.

Belongs to the F420-dependent glucose-6-phosphate dehydrogenase family. In terms of assembly, homodimer.

The catalysed reaction is oxidized coenzyme F420-(gamma-L-Glu)(n) + D-glucose 6-phosphate + H(+) = 6-phospho-D-glucono-1,5-lactone + reduced coenzyme F420-(gamma-L-Glu)(n). Catalyzes the coenzyme F420-dependent oxidation of glucose 6-phosphate (G6P) to 6-phosphogluconolactone. Appears to have a role in resistance to oxidative stress, via its consumption of G6P that serves as a source of reducing power to combat oxidative stress in mycobacteria. Cannot use NAD, NADP, FAD or FMN instead of coenzyme F420 as an electron acceptor. Exhibits nearly no activity with D-mannose-6-phosphate or D-fructose-6-phosphate as substrate. The chain is F420-dependent glucose-6-phosphate dehydrogenase (fgd) from Mycolicibacterium smegmatis (strain ATCC 700084 / mc(2)155) (Mycobacterium smegmatis).